A 113-amino-acid polypeptide reads, in one-letter code: Dolichyl-diphosphooligosaccharide--protein glycosyltransferase subunit DAD1 (113 aa).

Ser-2 carries the post-translational modification N-acetylserine. At 2-30 (SASVLSVISRFLEEYLSSTPQRLKLLDAY) the chain is on the cytoplasmic side. The chain crosses the membrane as a helical span at residues 31 to 51 (LLYILLTGALQFGYCLLVGTF). Position 52 (Pro-52) is a topological domain, lumenal. The chain crosses the membrane as a helical span at residues 53–73 (FNSFLSGFISCVGSFILAVCL). Residues 74 to 92 (RIQINPQNKADFQGISPER) are Cytoplasmic-facing. The chain crosses the membrane as a helical span at residues 93–113 (AFADFLFASTILHLVVMNFVG).

It belongs to the DAD/OST2 family. In terms of assembly, component of the oligosaccharyltransferase (OST) complex. OST exists in two different complex forms which contain common core subunits RPN1, RPN2, OST48, OST4, DAD1 and TMEM258, either STT3A or STT3B as catalytic subunits, and form-specific accessory subunits. STT3A complex assembly occurs through the formation of 3 subcomplexes. Subcomplex 1 contains RPN1 and TMEM258, subcomplex 2 contains the STT3A-specific subunits STT3A, DC2/OSTC, and KCP2 as well as the core subunit OST4, and subcomplex 3 contains RPN2, DAD1, and OST48. The STT3A complex can form stable complexes with the Sec61 complex or with both the Sec61 and TRAP complexes.

The protein localises to the endoplasmic reticulum membrane. It functions in the pathway protein modification; protein glycosylation. In terms of biological role, subunit of the oligosaccharyl transferase (OST) complex that catalyzes the initial transfer of a defined glycan (Glc(3)Man(9)GlcNAc(2) in eukaryotes) from the lipid carrier dolichol-pyrophosphate to an asparagine residue within an Asn-X-Ser/Thr consensus motif in nascent polypeptide chains, the first step in protein N-glycosylation. N-glycosylation occurs cotranslationally and the complex associates with the Sec61 complex at the channel-forming translocon complex that mediates protein translocation across the endoplasmic reticulum (ER). All subunits are required for a maximal enzyme activity. The polypeptide is Dolichyl-diphosphooligosaccharide--protein glycosyltransferase subunit DAD1 (Sus scrofa (Pig)).